Here is a 248-residue protein sequence, read N- to C-terminus: Ureidoacrylate amidohydrolase RutB (248 aa).

The active-site Proton acceptor is Asp41. The active site involves Lys150. Cys183 functions as the Nucleophile in the catalytic mechanism.

This sequence belongs to the isochorismatase family. RutB subfamily.

It carries out the reaction (Z)-3-ureidoacrylate + H2O + H(+) = (Z)-3-aminoacrylate + NH4(+) + CO2. The catalysed reaction is (Z)-3-ureidoacrylate + H2O = (Z)-3-aminoacrylate + carbamate + H(+). It catalyses the reaction (Z)-2-methylureidoacrylate + H2O + H(+) = (Z)-2-methylaminoacrylate + NH4(+) + CO2. Hydrolyzes ureidoacrylate to form aminoacrylate and carbamate. The carbamate hydrolyzes spontaneously, thereby releasing one of the nitrogen atoms of the pyrimidine ring as ammonia and one of its carbon atoms as CO2. The sequence is that of Ureidoacrylate amidohydrolase RutB from Methylorubrum extorquens (strain CM4 / NCIMB 13688) (Methylobacterium extorquens).